The sequence spans 147 residues: Sec-independent protein translocase protein TatB (147 aa).

A helical transmembrane segment spans residues 2-22; the sequence is FDGIGFMELLLIGVLGLVVLG. Polar residues predominate over residues 85 to 97; the sequence is QLKQAAQSVNRPY. Residues 85-147 form a disordered region; the sequence is QLKQAAQSVN…DTRSNPKANG (63 aa). Over residues 113-133 the composition is skewed to low complexity; sequence ASQSVSTEASPSASSAPTSES.

The protein belongs to the TatB family. As to quaternary structure, the Tat system comprises two distinct complexes: a TatABC complex, containing multiple copies of TatA, TatB and TatC subunits, and a separate TatA complex, containing only TatA subunits. Substrates initially bind to the TatABC complex, which probably triggers association of the separate TatA complex to form the active translocon.

It localises to the cell inner membrane. Functionally, part of the twin-arginine translocation (Tat) system that transports large folded proteins containing a characteristic twin-arginine motif in their signal peptide across membranes. Together with TatC, TatB is part of a receptor directly interacting with Tat signal peptides. TatB may form an oligomeric binding site that transiently accommodates folded Tat precursor proteins before their translocation. The polypeptide is Sec-independent protein translocase protein TatB (Shewanella sp. (strain ANA-3)).